The following is a 130-amino-acid chain: Small ribosomal subunit protein uS9 (130 aa).

Belongs to the universal ribosomal protein uS9 family.

The polypeptide is Small ribosomal subunit protein uS9 (Streptococcus uberis (strain ATCC BAA-854 / 0140J)).